Reading from the N-terminus, the 127-residue chain is Protein ApaG (127 aa).

In terms of domain architecture, ApaG spans 3 to 127 (EGKKYEIAVK…FILSVPRILH (125 aa)).

This chain is Protein ApaG, found in Nitrosospira multiformis (strain ATCC 25196 / NCIMB 11849 / C 71).